A 230-amino-acid chain; its full sequence is Large ribosomal subunit protein uL1c (230 aa).

The protein belongs to the universal ribosomal protein uL1 family. In terms of assembly, part of the 50S ribosomal subunit.

It is found in the plastid. Its subcellular location is the chloroplast. Functionally, binds directly to 23S rRNA. Might be involved in E site tRNA release (Potential). The protein is Large ribosomal subunit protein uL1c (rpl1) of Phaeodactylum tricornutum (strain CCAP 1055/1).